The sequence spans 112 residues: uncharacterized protein (112 aa).

The helical transmembrane segment at 89-106 (TLYVLVIVGLTILCFLLV) threads the bilayer.

Belongs to the IIV-6 466R family.

It localises to the membrane. This is an uncharacterized protein from Aedes vexans (Inland floodwater mosquito).